The following is a 257-amino-acid chain: Protein YIPF5 (257 aa).

At 1-124 the chain is on the cytoplasmic side; the sequence is MSGFENLNTD…KVADGSIMNE (124 aa). The interaction with Sec23 stretch occupies residues 75 to 106; that stretch reads PASPQPFYGNNFEDEPPLLEELGINFDHIWQK. Residues 125 to 145 traverse the membrane as a helical segment; that stretch reads TDLAGPMVFCLAFGATLLLAG. Position 146 (Lys-146) is a topological domain, lumenal. Residues 147–167 traverse the membrane as a helical segment; that stretch reads IQFGYVYGISAIGCLGMFCLL. Topologically, residues 168–173 are cytoplasmic; that stretch reads NLMSMT. The chain crosses the membrane as a helical span at residues 174 to 194; it reads GVSFGCVASVLGYCLLPMILL. Over 195–196 the chain is Lumenal; sequence SS. Residues 197–217 form a helical membrane-spanning segment; sequence FAVIFSLQGMVGIILTAGIIG. Topologically, residues 218–236 are cytoplasmic; it reads WCSFSASKIFISALAMEGQ. The chain crosses the membrane as a helical span at residues 237-257; sequence QLLVAYPCALLYGVFALISVF.

The protein belongs to the YIP1 family. In terms of assembly, interacts with the COPII coat components Sec23 (SEC23A and/or SEC23B) and Sec24 (SEC24A and/or SEC24B). Interacts with YIF1A. May interact with RAB1A. Interacts with YIPF3 and YIPF4. Ubiquitously expressed with abundant expression in pancreatic tissue, islets, beta cells, and brain. Highly expressed in coronary smooth muscles.

Its subcellular location is the endoplasmic reticulum membrane. It localises to the golgi apparatus. It is found in the cis-Golgi network membrane. The protein localises to the cytoplasmic vesicle. The protein resides in the COPII-coated vesicle. In terms of biological role, plays a role in transport between endoplasmic reticulum and Golgi. In pancreatic beta cells, required to transport proinsulin from endoplasmic reticulum into the Golgi. This chain is Protein YIPF5, found in Homo sapiens (Human).